The sequence spans 328 residues: 4-hydroxythreonine-4-phosphate dehydrogenase (328 aa).

Positions 135 and 136 each coordinate substrate. Residues His165, His210, and His265 each contribute to the a divalent metal cation site. Substrate is bound by residues Lys273, Asn282, and Arg291.

This sequence belongs to the PdxA family. As to quaternary structure, homodimer. Zn(2+) serves as cofactor. Requires Mg(2+) as cofactor. It depends on Co(2+) as a cofactor.

It localises to the cytoplasm. The enzyme catalyses 4-(phosphooxy)-L-threonine + NAD(+) = 3-amino-2-oxopropyl phosphate + CO2 + NADH. Its pathway is cofactor biosynthesis; pyridoxine 5'-phosphate biosynthesis; pyridoxine 5'-phosphate from D-erythrose 4-phosphate: step 4/5. In terms of biological role, catalyzes the NAD(P)-dependent oxidation of 4-(phosphooxy)-L-threonine (HTP) into 2-amino-3-oxo-4-(phosphooxy)butyric acid which spontaneously decarboxylates to form 3-amino-2-oxopropyl phosphate (AHAP). This is 4-hydroxythreonine-4-phosphate dehydrogenase from Pseudomonas aeruginosa (strain ATCC 15692 / DSM 22644 / CIP 104116 / JCM 14847 / LMG 12228 / 1C / PRS 101 / PAO1).